A 339-amino-acid chain; its full sequence is Silicatein (339 aa).

A signal peptide spans 1–18 (MAIVYGAILFQIILIACA). The propeptide occupies 19–122 (EFPPEWHAWK…REYQAPATVS (104 aa)). Leucine 123 is modified (n,N-dimethylleucine; alternate). N-methylleucine; alternate is present on leucine 123. Phosphoserine is present on serine 188. Phosphotyrosine is present on tyrosine 219. Catalysis depends on residues histidine 286 and asparagine 306. Serine 335 is modified (phosphoserine).

Belongs to the peptidase C1 family. In terms of assembly, homodimer. Homodimerization occurs as a result of non-covalent interactions and not through disulfide linkages between the two monomers.

In terms of biological role, polymerizes silica around the axial filament during spicule formation. The protein is Silicatein of Petrosia ficiformis (Common Mediterranean sponge).